Consider the following 688-residue polypeptide: Potassium-transporting ATPase ATP-binding subunit (688 aa).

4 helical membrane-spanning segments follow: residues 35 to 55 (VMFVVYVGSILTTILWVQALG), 62 to 82 (AGFILAITIWLWFTVLFANFA), 219 to 239 (IALTILLVALTIVFLGVIVTL), and 260 to 280 (VLIALLVCLIPTTIAGLLSAI). Asp-313 (4-aspartylphosphate intermediate) is an active-site residue. Residues Asp-350, Glu-354, 383–390 (FSAHTRMS), and Lys-401 each bind ATP. Asp-524 and Asp-528 together coordinate Mg(2+). 3 helical membrane passes run 594–614 (FAIIPAAFVTTYPQLAALNVM), 622–642 (AILSAVIFNALIIVFLIPLAL), and 668–688 (VIVPFIGIKLIDLAIAAVGLA).

Belongs to the cation transport ATPase (P-type) (TC 3.A.3) family. Type IA subfamily. The system is composed of three essential subunits: KdpA, KdpB and KdpC.

It localises to the cell inner membrane. The enzyme catalyses K(+)(out) + ATP + H2O = K(+)(in) + ADP + phosphate + H(+). In terms of biological role, part of the high-affinity ATP-driven potassium transport (or Kdp) system, which catalyzes the hydrolysis of ATP coupled with the electrogenic transport of potassium into the cytoplasm. This subunit is responsible for energy coupling to the transport system and for the release of the potassium ions to the cytoplasm. The protein is Potassium-transporting ATPase ATP-binding subunit of Dechloromonas aromatica (strain RCB).